A 334-amino-acid polypeptide reads, in one-letter code: Nucleoid-associated protein YPK_2796 (334 aa).

This sequence belongs to the YejK family.

It localises to the cytoplasm. The protein resides in the nucleoid. The polypeptide is Nucleoid-associated protein YPK_2796 (Yersinia pseudotuberculosis serotype O:3 (strain YPIII)).